A 2131-amino-acid polypeptide reads, in one-letter code: Protein Ycf2 (2131 aa).

1484 to 1491 (GSIGTGRS) lines the ATP pocket.

The protein belongs to the Ycf2 family.

The protein localises to the plastid. It is found in the chloroplast stroma. In terms of biological role, probable ATPase of unknown function. Its presence in a non-photosynthetic plant (Epifagus virginiana) and experiments in tobacco indicate that it has an essential function which is probably not related to photosynthesis. This Spinacia oleracea (Spinach) protein is Protein Ycf2 (ycf2-A).